Here is a 385-residue protein sequence, read N- to C-terminus: WD repeat-containing protein 74 (385 aa).

WD repeat units follow at residues 40-80 (RREE…FQGQ), 83-122 (CPGG…ASSD), 128-168 (RVGP…EPLF), 179-220 (DLRV…RRPV), 224-266 (TYGE…GCLK), and 267-306 (GLAG…GLEH). Position 214 is a phosphoserine (Ser-214). The residue at position 311 (Lys-311) is an N6-methyllysine. The interval 320–385 (SGRDNWEDEP…KKKRPGSTSS (66 aa)) is required for nucleolar and nuclear location. Positions 323–385 (DNWEDEPQEP…KKKRPGSTSS (63 aa)) are disordered. Basic residues predominate over residues 372-385 (ARRRKKKRPGSTSS).

Isoform 1 interacts (through WDR repeats) with NVL; the interaction is independent of RNA or pre-60S ribosome particles. Isoform 2 does not interact with NVL. Interacts with MTREX; the interaction dissociation in a late stage of rRNA synthesis is required for appropriate maturation of pre-60S particles and depends on the ATPase activity of NVL.

It localises to the nucleus. The protein localises to the nucleolus. Regulatory protein of the MTREX-exosome complex involved in the synthesis of the 60S ribosomal subunit. Participates in an early cleavage of the pre-rRNA processing pathway in cooperation with NVL. In Bos taurus (Bovine), this protein is WD repeat-containing protein 74 (WDR74).